The chain runs to 54 residues: Synaptosomal-associated protein 25 (54 aa).

Belongs to the SNAP-25 family. In terms of assembly, part of the SNARE core complex containing SNAP25, VAMP2 and STX1A; this complex binds CPLX1. Found in a complex containing SYT1, SV2B and syntaxin-1. Found in a ternary complex with STX1A and VAMP8. Interacts with HSC70 and with SYT9, forming a complex with DNAJC5. The interaction with SYT9 is inhibited in presence of calcium. Isoform 1 and isoform 2 interact with BLOC1S6. Interacts with CENPF. Interacts with EQTN. Interacts with HGS. Interacts with KCNB1 (via N-terminus); reduces the voltage-dependent potassium channel KCNB1 activity in pancreatic beta cells. Interacts with OTOF. Interacts with RIMS1. Interacts with SNAPIN. Interacts with STXBP6. Interacts with TRIM9. Interacts with ZDHHC13 (via ANK repeats). Interacts with ZDHHC17 (via ANK repeats). Associates with the BLOC-1 complex. Interacts with PLCL1 (via C2 domain). Interacts with PRRT2; this interaction may impair the formation of the SNARE complex. Interacts with alpha-synuclein/SNCA. Interacts with PRPH2. Interacts with ROM1. Interacts with STX3. Post-translationally, the N-terminus is blocked.

It localises to the cytoplasm. The protein localises to the perinuclear region. It is found in the cell membrane. The protein resides in the synapse. Its subcellular location is the synaptosome. It localises to the photoreceptor inner segment. In terms of biological role, t-SNARE involved in the molecular regulation of neurotransmitter release. May play an important role in the synaptic function of specific neuronal systems. Associates with proteins involved in vesicle docking and membrane fusion. Regulates plasma membrane recycling through its interaction with CENPF. Modulates the gating characteristics of the delayed rectifier voltage-dependent potassium channel KCNB1 in pancreatic beta cells. This Oryctolagus cuniculus (Rabbit) protein is Synaptosomal-associated protein 25 (SNAP25).